A 687-amino-acid chain; its full sequence is Bifunctional lysine-specific demethylase and histidyl-hydroxylase NO66 (687 aa).

A disordered region spans residues 1 to 174 (MSDKNKKVSA…RSCPLPSKKN (174 aa)). Residues 23–32 (DVQKGTKNSD) show a composition bias toward basic and acidic residues. Low complexity-rich tracts occupy residues 33–50 (KNGA…SKNG) and 58–74 (KKNG…SSSS). The span at 75 to 96 (GEDEEDDSTDSSDEYESSESGE) shows a compositional bias: acidic residues. 2 stretches are compositionally biased toward polar residues: residues 100–116 (LNSH…ANTR) and 136–156 (RTSS…QQPK). The 137-residue stretch at 347 to 483 (NPSSYLVQLR…NLMEKLMPLV (137 aa)) folds into the JmjC domain. His-387, Asp-389, and His-449 together coordinate Fe cation.

It belongs to the ROX family. NO66 subfamily. Fe(2+) is required as a cofactor.

The protein localises to the nucleus. The enzyme catalyses N(6),N(6)-dimethyl-L-lysyl(36)-[histone H3] + 2 2-oxoglutarate + 2 O2 = L-lysyl(36)-[histone H3] + 2 formaldehyde + 2 succinate + 2 CO2. In terms of biological role, oxygenase that can act as both a histone lysine demethylase and a ribosomal histidine hydroxylase. Specifically demethylates 'Lys-4' (H3K4me) and 'Lys-36' (H3K36me) of histone H3, thereby playing a central role in histone code. The protein is Bifunctional lysine-specific demethylase and histidyl-hydroxylase NO66 of Drosophila persimilis (Fruit fly).